The primary structure comprises 450 residues: Bifunctional protein GlmU (450 aa).

A pyrophosphorylase region spans residues 1–226 (MLAVAVLAAG…PDEVNGINNR (226 aa)). UDP-N-acetyl-alpha-D-glucosamine is bound by residues 7–10 (LAAG), K21, Q73, and 78–79 (GT). D103 is a binding site for Mg(2+). G140, E155, N170, and N224 together coordinate UDP-N-acetyl-alpha-D-glucosamine. N224 is a Mg(2+) binding site. Residues 227-247 (QQLAQCETMLQERLRHHWMAE) form a linker region. The segment at 248–450 (GVTFVDPASC…IKENWAGPQG (203 aa)) is N-acetyltransferase. R329 and K347 together coordinate UDP-N-acetyl-alpha-D-glucosamine. The Proton acceptor role is filled by H359. 2 residues coordinate UDP-N-acetyl-alpha-D-glucosamine: Y362 and N373. Acetyl-CoA-binding positions include A376, 382–383 (NY), A419, and R436.

The protein in the N-terminal section; belongs to the N-acetylglucosamine-1-phosphate uridyltransferase family. This sequence in the C-terminal section; belongs to the transferase hexapeptide repeat family. In terms of assembly, homotrimer. Mg(2+) is required as a cofactor.

It is found in the cytoplasm. It carries out the reaction alpha-D-glucosamine 1-phosphate + acetyl-CoA = N-acetyl-alpha-D-glucosamine 1-phosphate + CoA + H(+). It catalyses the reaction N-acetyl-alpha-D-glucosamine 1-phosphate + UTP + H(+) = UDP-N-acetyl-alpha-D-glucosamine + diphosphate. It participates in nucleotide-sugar biosynthesis; UDP-N-acetyl-alpha-D-glucosamine biosynthesis; N-acetyl-alpha-D-glucosamine 1-phosphate from alpha-D-glucosamine 6-phosphate (route II): step 2/2. It functions in the pathway nucleotide-sugar biosynthesis; UDP-N-acetyl-alpha-D-glucosamine biosynthesis; UDP-N-acetyl-alpha-D-glucosamine from N-acetyl-alpha-D-glucosamine 1-phosphate: step 1/1. Its pathway is bacterial outer membrane biogenesis; LPS lipid A biosynthesis. In terms of biological role, catalyzes the last two sequential reactions in the de novo biosynthetic pathway for UDP-N-acetylglucosamine (UDP-GlcNAc). The C-terminal domain catalyzes the transfer of acetyl group from acetyl coenzyme A to glucosamine-1-phosphate (GlcN-1-P) to produce N-acetylglucosamine-1-phosphate (GlcNAc-1-P), which is converted into UDP-GlcNAc by the transfer of uridine 5-monophosphate (from uridine 5-triphosphate), a reaction catalyzed by the N-terminal domain. This Synechococcus sp. (strain RCC307) protein is Bifunctional protein GlmU.